We begin with the raw amino-acid sequence, 498 residues long: ATP synthase subunit beta, chloroplastic (498 aa).

172–179 (GGAGVGKT) is an ATP binding site.

The protein belongs to the ATPase alpha/beta chains family. As to quaternary structure, F-type ATPases have 2 components, CF(1) - the catalytic core - and CF(0) - the membrane proton channel. CF(1) has five subunits: alpha(3), beta(3), gamma(1), delta(1), epsilon(1). CF(0) has four main subunits: a(1), b(1), b'(1) and c(9-12).

It localises to the plastid. It is found in the chloroplast thylakoid membrane. It carries out the reaction ATP + H2O + 4 H(+)(in) = ADP + phosphate + 5 H(+)(out). Its function is as follows. Produces ATP from ADP in the presence of a proton gradient across the membrane. The catalytic sites are hosted primarily by the beta subunits. The polypeptide is ATP synthase subunit beta, chloroplastic (Oenothera biennis (German evening primrose)).